The primary structure comprises 63 residues: Sarcotoxin-1A (63 aa).

The signal sequence occupies residues 1–23 (MNFQNIFIFVALILAVFAGQSQA). R62 is modified (arginine amide).

Belongs to the cecropin family.

It is found in the secreted. Functionally, sarcotoxins, which are potent bactericidal proteins, are produced in response to injury. They are cytotoxic to both Gram-positive and Gram-negative bacteria. This Sarcophaga peregrina (Flesh fly) protein is Sarcotoxin-1A.